Here is a 286-residue protein sequence, read N- to C-terminus: Sulfur carrier protein FdhD (286 aa).

Cys-110 acts as the Cysteine persulfide intermediate in catalysis. Phe-247–Lys-252 provides a ligand contact to Mo-bis(molybdopterin guanine dinucleotide).

It belongs to the FdhD family.

It localises to the cytoplasm. Functionally, required for formate dehydrogenase (FDH) activity. Acts as a sulfur carrier protein that transfers sulfur from IscS to the molybdenum cofactor prior to its insertion into FDH. This chain is Sulfur carrier protein FdhD, found in Wolinella succinogenes (strain ATCC 29543 / DSM 1740 / CCUG 13145 / JCM 31913 / LMG 7466 / NCTC 11488 / FDC 602W) (Vibrio succinogenes).